The chain runs to 309 residues: MVFPAKRFCLVPSMEGVRWAFSCGTWLPSRAEWLLAVRSIQPEEKERIGQFVFARDAKAAMAGRLMIRKLVAEKLNIPWNHIRLQRTAKGKPVLAKDSSNPYPNFNFNISHQGDYAVLAAEPELQVGIDIMKTSFPGRGSIPEFFHIMKRKFTNKEWETIRGFKDEWTQLDMFYRNWALKESFIKAIGVGLGFELQRLEFDLSPLNLDIGQVYKETRLFLDGEEEKEWAFEESKIDEHHFVAVALRKPDGSRHQDVPSQDDSKPTQRQFTILNFNDLISSAVPMTPEDPSFWDCFCFTEEIPIRNGTKS.

Residues arginine 47, 86–91 (RTAKGK), and 108–111 (NISH) each bind CoA. Positions 129 and 181 each coordinate Mg(2+). CoA is bound at residue 181 to 185 (ESFIK). The residue at position 258 (serine 258) is a Phosphoserine.

This sequence belongs to the P-Pant transferase superfamily. AcpS family. In terms of assembly, monomer. Mg(2+) serves as cofactor.

The protein localises to the cytoplasm. Its subcellular location is the cytosol. It carries out the reaction apo-[ACP] + CoA = holo-[ACP] + adenosine 3',5'-bisphosphate + H(+). The enzyme catalyses apo-[ACP] + acetyl-CoA = acetyl-[ACP] + adenosine 3',5'-bisphosphate + H(+). Functionally, catalyzes the post-translational modification of target proteins by phosphopantetheine. Can transfer the 4'-phosphopantetheine moiety from coenzyme A, regardless of whether the CoA is presented in the free thiol form or as an acetyl thioester, to a serine residue of a broad range of acceptors including the acyl carrier domain of FASN. The chain is L-aminoadipate-semialdehyde dehydrogenase-phosphopantetheinyl transferase (AASDHPPT) from Pongo abelii (Sumatran orangutan).